The sequence spans 425 residues: SWI/SNF and RSC complexes subunit ssr3 (425 aa).

Over residues 1–16 (MSNNSRLPENGVQSGN) the composition is skewed to polar residues. The disordered stretch occupies residues 1–23 (MSNNSRLPENGVQSGNGEDAELK). An SWIB/MDM2 domain is found at 201–278 (EHPERYKLSK…PELMNRFLEP (78 aa)).

Belongs to the SMARCD family. In terms of assembly, component of the RSC complex composed of at least arp9, arp42, rsc1, rsc4, rsc7, rsc9, rsc58, sfh1, snf21, ssr1, ssr2, ssr3 and ssr4. The complex interacts with histone and histone variant components of centromeric chromatin. Component of the SWI/SNF global transcription activator complex composed of at least arp9, arp42, snf5, snf22, snf30, sbf59, sol1, ssr1, ssr2, ssr3, ssr4 and tfg3.

The protein localises to the cytoplasm. Its subcellular location is the nucleus. Functionally, component of the chromatin structure remodeling complex (RSC), which is involved in transcription regulation and nucleosome positioning. Controls particularly membrane and organelle development genes. Part of the SWI/SNF complex, an ATP-dependent chromatin remodeling complex, required for the positive and negative regulation of gene expression of a large number of genes. It changes chromatin structure by altering DNA-histone contacts within a nucleosome, leading eventually to a change in nucleosome position, thus facilitating or repressing binding of gene-specific transcription factors. This chain is SWI/SNF and RSC complexes subunit ssr3 (ssr3), found in Schizosaccharomyces pombe (strain 972 / ATCC 24843) (Fission yeast).